The chain runs to 626 residues: 1-deoxy-D-xylulose-5-phosphate synthase 2 (626 aa).

Residues His74 and 115 to 117 (GHA) contribute to the thiamine diphosphate site. Asp146 serves as a coordination point for Mg(2+). Thiamine diphosphate contacts are provided by residues 147-148 (GS), Asn175, Phe286, and Glu368. Asn175 is a binding site for Mg(2+).

It belongs to the transketolase family. DXPS subfamily. In terms of assembly, homodimer. It depends on Mg(2+) as a cofactor. Requires thiamine diphosphate as cofactor.

The catalysed reaction is D-glyceraldehyde 3-phosphate + pyruvate + H(+) = 1-deoxy-D-xylulose 5-phosphate + CO2. It functions in the pathway metabolic intermediate biosynthesis; 1-deoxy-D-xylulose 5-phosphate biosynthesis; 1-deoxy-D-xylulose 5-phosphate from D-glyceraldehyde 3-phosphate and pyruvate: step 1/1. Functionally, catalyzes the acyloin condensation reaction between C atoms 2 and 3 of pyruvate and glyceraldehyde 3-phosphate to yield 1-deoxy-D-xylulose-5-phosphate (DXP). This Geobacter sulfurreducens (strain ATCC 51573 / DSM 12127 / PCA) protein is 1-deoxy-D-xylulose-5-phosphate synthase 2.